Reading from the N-terminus, the 492-residue chain is N-succinylglutamate 5-semialdehyde dehydrogenase (492 aa).

Position 220 to 225 (220 to 225) interacts with NAD(+); sequence GSASTG. Catalysis depends on residues Glu243 and Cys277.

The protein belongs to the aldehyde dehydrogenase family. AstD subfamily.

It catalyses the reaction N-succinyl-L-glutamate 5-semialdehyde + NAD(+) + H2O = N-succinyl-L-glutamate + NADH + 2 H(+). It functions in the pathway amino-acid degradation; L-arginine degradation via AST pathway; L-glutamate and succinate from L-arginine: step 4/5. Its function is as follows. Catalyzes the NAD-dependent reduction of succinylglutamate semialdehyde into succinylglutamate. The sequence is that of N-succinylglutamate 5-semialdehyde dehydrogenase from Salmonella heidelberg (strain SL476).